Reading from the N-terminus, the 189-residue chain is Glutathione-dependent formaldehyde-activating enzyme (189 aa).

The region spanning 20 to 166 (FAGGTLVCAC…LRTIGLEPYD (147 aa)) is the CENP-V/GFA domain. 7 residues coordinate Zn(2+): Cys-27, Cys-29, Cys-48, Cys-50, Cys-53, Cys-95, and Cys-98.

Belongs to the Gfa family. It depends on Zn(2+) as a cofactor.

The catalysed reaction is S-(hydroxymethyl)glutathione = glutathione + formaldehyde. It participates in one-carbon metabolism; formaldehyde degradation; formate from formaldehyde (glutathione route): step 1/3. Catalyzes the condensation of formaldehyde and glutathione to S-hydroxymethylglutathione. In Mesorhizobium japonicum (strain LMG 29417 / CECT 9101 / MAFF 303099) (Mesorhizobium loti (strain MAFF 303099)), this protein is Glutathione-dependent formaldehyde-activating enzyme.